The following is a 720-amino-acid chain: Serrate RNA effector molecule (720 aa).

3 disordered regions span residues Met-1–Arg-192, Leu-288–Asp-335, and Glu-361–Gly-380. Residues Ser-33–Pro-47 are compositionally biased toward low complexity. Basic and acidic residues predominate over residues Leu-48 to Ser-76. Phosphoserine occurs at positions 76, 90, and 92. Residues Asp-99–Tyr-115 are compositionally biased toward basic residues. Composition is skewed to basic and acidic residues over residues Arg-116–Arg-126 and Pro-136–His-164. Residues Leu-288–Pro-297 are compositionally biased toward polar residues. The span at Glu-368–His-378 shows a compositional bias: basic and acidic residues. The C2H2-type zinc-finger motif lies at Tyr-498–His-523. Disordered regions lie at residues Tyr-543–Gly-622 and Arg-666–Leu-687. Basic and acidic residues predominate over residues Pro-570–Asn-607. Over residues Asp-608–Gly-622 the composition is skewed to gly residues. Phosphoserine is present on Ser-689.

It belongs to the ARS2 family. As to quaternary structure, interacts with HYL1. Interacts with RCF3, RS40 and RS41. As to expression, expressed in shoot meristems and in emerging organ primordia throughout development.

The protein localises to the nucleus. It localises to the nucleus speckle. In terms of biological role, acts as a mediator between the cap-binding complex (CBC) and both the pre-mRNA splicing and primary microRNAs (miRNAs) processing machinery. Required for proper processing of primary miRNAs to miRNAs, thereby playing a role in RNA-mediated gene silencing (RNAi) by miRNAs. Does not participate in sense post-transcriptional gene silencing. Acts as a regulator of meristem activity and adaxial leaf fate via the miRNA gene-silencing pathway by regulating the expression of PHB and by limiting the competence of shoot tissue to respond to KNOX expression. Its function is however not limited to miRNA-mediated repression of leaf polarity genes, but rather acts as a general regulator of primary microRNAs processing. Also critical for the accumulation of the trans-acting small interfering RNA (ta-siRNA). Required for pre-mRNA splicing. The polypeptide is Serrate RNA effector molecule (SE) (Arabidopsis thaliana (Mouse-ear cress)).